Reading from the N-terminus, the 712-residue chain is Phosphoribosylformylglycinamidine synthase subunit PurL (712 aa).

His32 is a catalytic residue. Residue Tyr35 coordinates ATP. Glu76 serves as a coordination point for Mg(2+). Residues 77-80 and Arg99 contribute to the substrate site; that span reads SHNH. His78 acts as the Proton acceptor in catalysis. Mg(2+) is bound at residue Asp100. Substrate is bound at residue Gln223. Asp251 is a binding site for Mg(2+). 295 to 297 lines the substrate pocket; the sequence is ESQ. ATP is bound by residues Asp470 and Gly507. Asn508 contacts Mg(2+). Residue Ser510 participates in substrate binding.

It belongs to the FGAMS family. Monomer. Part of the FGAM synthase complex composed of 1 PurL, 1 PurQ and 2 PurS subunits.

Its subcellular location is the cytoplasm. The catalysed reaction is N(2)-formyl-N(1)-(5-phospho-beta-D-ribosyl)glycinamide + L-glutamine + ATP + H2O = 2-formamido-N(1)-(5-O-phospho-beta-D-ribosyl)acetamidine + L-glutamate + ADP + phosphate + H(+). Its pathway is purine metabolism; IMP biosynthesis via de novo pathway; 5-amino-1-(5-phospho-D-ribosyl)imidazole from N(2)-formyl-N(1)-(5-phospho-D-ribosyl)glycinamide: step 1/2. Part of the phosphoribosylformylglycinamidine synthase complex involved in the purines biosynthetic pathway. Catalyzes the ATP-dependent conversion of formylglycinamide ribonucleotide (FGAR) and glutamine to yield formylglycinamidine ribonucleotide (FGAM) and glutamate. The FGAM synthase complex is composed of three subunits. PurQ produces an ammonia molecule by converting glutamine to glutamate. PurL transfers the ammonia molecule to FGAR to form FGAM in an ATP-dependent manner. PurS interacts with PurQ and PurL and is thought to assist in the transfer of the ammonia molecule from PurQ to PurL. This Thermococcus gammatolerans (strain DSM 15229 / JCM 11827 / EJ3) protein is Phosphoribosylformylglycinamidine synthase subunit PurL.